The chain runs to 386 residues: Putative matrix metalloproteinase (386 aa).

The first 34 residues, 1–34 (MPTAHFQHSIRYLNVTNMLIFSIISFLLIYQTNS), serve as a signal peptide directing secretion. N14 and N58 each carry an N-linked (GlcNAc...) asparagine; by host glycan. H186 is a binding site for Zn(2+). E187 is an active-site residue. H190 and H196 together coordinate Zn(2+). Positions 235–258 (NEQSTHQSTRHRPHRRPSPDGSCR) are disordered.

It belongs to the peptidase M10A family. Zn(2+) serves as cofactor.

This is Putative matrix metalloproteinase from Spodoptera frugiperda (Fall armyworm).